The sequence spans 487 residues: Lysophospholipid acyltransferase 5 (487 aa).

N-acetylalanine is present on A2. Transmembrane regions (helical) follow at residues 44-64, 84-104, 111-131, 180-200, 227-247, and 285-305; these read LIIS…YLFY, FNFG…FLIL, ITAV…GYYY, GVPS…FLVG, IIPA…YTLL, and VTCW…FNGF. Active-site residues include N338 and H374. The next 3 membrane-spanning stretches (helical) occupy residues 364–384, 422–442, and 453–473; these read GLSL…LVCF, LVQQ…FCLF, and SIYF…PYIH. Residues 484–487 carry the Di-lysine motif motif; that stretch reads KKME.

This sequence belongs to the membrane-bound acyltransferase family. Highly expressed in liver, pancreas and adipose tissue. Very low expression in skeletal muscle and heart. Detected in neutrophils.

The protein resides in the endoplasmic reticulum membrane. It carries out the reaction a 1-acyl-sn-glycero-3-phosphocholine + an acyl-CoA = a 1,2-diacyl-sn-glycero-3-phosphocholine + CoA. It catalyses the reaction a 1-acyl-sn-glycero-3-phosphoethanolamine + an acyl-CoA = a 1,2-diacyl-sn-glycero-3-phosphoethanolamine + CoA. The catalysed reaction is a 1-acyl-sn-glycero-3-phospho-L-serine + an acyl-CoA = a 1,2-diacyl-sn-glycero-3-phospho-L-serine + CoA. The enzyme catalyses (9Z,12Z)-octadecadienoyl-CoA + a 1-acyl-sn-glycero-3-phosphocholine = 1-acyl-2-(9Z,12Z)-octadecadienoyl-sn-glycero-3-phosphocholine + CoA. It carries out the reaction (5Z,8Z,11Z,14Z)-eicosatetraenoyl-CoA + a 1-acyl-sn-glycero-3-phosphocholine = 1-acyl-2-(5Z,8Z,11Z,14Z-eicosatetraenoyl)-sn-glycero-3-phosphocholine + CoA. It catalyses the reaction dodecanoyl-CoA + 1-hexadecanoyl-sn-glycero-3-phosphocholine = 1-hexadecanoyl-2-dodecanoyl-sn-glycero-3-phosphocholine + CoA. The catalysed reaction is octadecanoyl-CoA + 1-hexadecanoyl-sn-glycero-3-phosphocholine = 1-hexadecanoyl-2-octadecanoyl-sn-glycero-3-phosphocholine + CoA. The enzyme catalyses 1-dodecanoyl-sn-glycero-3-phosphocholine + hexadecanoyl-CoA = 1-dodecanoyl-2-hexadecanoyl-sn-glycero-3-phosphocholine + CoA. It carries out the reaction 1-tetradecanoyl-sn-glycero-3-phosphocholine + hexadecanoyl-CoA = 1-tetradecanoyl-2-hexadecanoyl-sn-glycero-3-phosphocholine + CoA. It catalyses the reaction 1-hexadecanoyl-sn-glycero-3-phosphocholine + hexadecanoyl-CoA = 1,2-dihexadecanoyl-sn-glycero-3-phosphocholine + CoA. The catalysed reaction is 1-octadecanoyl-sn-glycero-3-phosphocholine + hexadecanoyl-CoA = 1-octadecanoyl-2-hexadecanoyl-sn-glycero-3-phosphocholine + CoA. The enzyme catalyses 1-(9Z-octadecenoyl)-sn-glycero-3-phosphocholine + hexadecanoyl-CoA = 1-(9Z-octadecenoyl)-2-hexadecanoyl-sn-glycero-3-phosphocholine + CoA. It carries out the reaction (9Z)-hexadecenoyl-CoA + 1-hexadecanoyl-sn-glycero-3-phosphocholine = 1-hexadecanoyl-2-(9Z-hexadecenoyl)-sn-glycero-3-phosphocholine + CoA. It catalyses the reaction 1-hexadecanoyl-sn-glycero-3-phosphocholine + (9Z)-octadecenoyl-CoA = 1-hexadecanoyl-2-(9Z-octadecenoyl)-sn-glycero-3-phosphocholine + CoA. The catalysed reaction is (9Z,12Z)-octadecadienoyl-CoA + 1-hexadecanoyl-sn-glycero-3-phosphocholine = 1-hexadecanoyl-2-(9Z,12Z-octadecadienoyl)-sn-glycero-3-phosphocholine + CoA. The enzyme catalyses 1-dodecanoyl-sn-glycero-3-phosphocholine + (5Z,8Z,11Z,14Z)-eicosatetraenoyl-CoA = 1-dodecanoyl-2-(5Z,8Z,11Z,14Z)-eicosatetraenoyl-sn-glycero-3-phosphocholine + CoA. It carries out the reaction (5Z,8Z,11Z,14Z)-eicosatetraenoyl-CoA + 1-hexadecanoyl-sn-glycero-3-phosphocholine = 1-hexadecanoyl-2-(5Z,8Z,11Z,14Z-eicosatetraenoyl)-sn-glycero-3-phosphocholine + CoA. It catalyses the reaction 1-octadecanoyl-sn-glycero-3-phosphocholine + (5Z,8Z,11Z,14Z)-eicosatetraenoyl-CoA = 1-octadecanoyl-2-(5Z,8Z,11Z,14Z-eicosatetraenoyl)-sn-glycero-3-phosphocholine + CoA. The catalysed reaction is 1-eicosanoyl-sn-glycero-3-phosphocholine + (5Z,8Z,11Z,14Z)-eicosatetraenoyl-CoA = 1-eicosanoyl-2-(5Z,8Z,11Z,14Z)-eicosatetraenoyl-sn-glycero-3-phosphocholine + CoA. The enzyme catalyses 1-(9Z-octadecenoyl)-sn-glycero-3-phosphocholine + (9Z)-octadecenoyl-CoA = 1,2-di-(9Z-octadecenoyl)-sn-glycero-3-phosphocholine + CoA. It carries out the reaction 1-(9Z-octadecenoyl)-sn-glycero-3-phosphocholine + (9Z,12Z)-octadecadienoyl-CoA = 1-(9Z)-octadecenoyl-2-(9Z,12Z)-octadecadienoyl-sn-glycero-3-phosphocholine + CoA. It catalyses the reaction 1-(9Z-octadecenoyl)-sn-glycero-3-phosphocholine + (5Z,8Z,11Z,14Z)-eicosatetraenoyl-CoA = 1-(9Z)-octadecenoyl-2-(5Z,8Z,11Z,14Z)-icosatetraenoyl-sn-glycero-3-phosphocholine + CoA. The catalysed reaction is a 1-acyl-sn-glycero-3-phosphoethanolamine + (9Z,12Z)-octadecadienoyl-CoA = 1-acyl-2-(9Z,12Z)-octadecadienoyl-sn-glycero-3-phosphoethanolamine + CoA. The enzyme catalyses 1-(9Z-octadecenoyl)-sn-glycero-3-phosphoethanolamine + (9Z,12Z)-octadecadienoyl-CoA = 1-(9Z)-octadecenoyl-2-(9Z,12Z)-octadecadienoyl-sn-glycero-3-phosphoethanolamine + CoA. It carries out the reaction 1-(10Z-heptadecenoyl)-sn-glycero-3-phosphoethanolamine + (9Z,12Z)-octadecadienoyl-CoA = 1-(10Z-heptadecenoyl)-2-(9Z,12Z-octadecadienoyl)-sn-glycero-3-phosphoethanolamine + CoA. It catalyses the reaction a 1-acyl-sn-glycero-3-phosphoethanolamine + (5Z,8Z,11Z,14Z)-eicosatetraenoyl-CoA = 1-acyl-2-(5Z,8Z,11Z,14Z)-eicosatetraenoyl-sn-glycero-3-phosphoethanolamine + CoA. The catalysed reaction is 1-hexadecanoyl-sn-glycero-3-phosphoethanolamine + (5Z,8Z,11Z,14Z)-eicosatetraenoyl-CoA = 1-hexadecanoyl-2-(5Z,8Z,11Z,14Z-eicosatetraenoyl)-sn-glycero-3-phosphoethanolamine + CoA. The enzyme catalyses 1-(9Z-octadecenoyl)-sn-glycero-3-phosphoethanolamine + (5Z,8Z,11Z,14Z)-eicosatetraenoyl-CoA = 1-(9Z)-octadecenoyl-2-(5Z,8Z,11Z,14Z)-eicosatetraenoyl-sn-glycero-3-phosphoethanolamine + CoA. It carries out the reaction 1-(10Z-heptadecenoyl)-sn-glycero-3-phosphoethanolamine + (5Z,8Z,11Z,14Z)-eicosatetraenoyl-CoA = 1-(10Z-heptadecenoyl)-2-(5Z,8Z,11Z,14Z-eicosatetraenoyl)-sn-glycero-3-phosphoethanolamine + CoA. It catalyses the reaction a 1-O-(1Z-alkenyl)-sn-glycero-3-phosphoethanolamine + (5Z,8Z,11Z,14Z)-eicosatetraenoyl-CoA = 1-O-(1Z)-alkenyl-2-(5Z,8Z,11Z,14Z)-eicosatetraenoyl-sn-glycero-3-phosphoethanolamine + CoA. The catalysed reaction is a 1-acyl-sn-glycero-3-phospho-L-serine + (9Z,12Z)-octadecadienoyl-CoA = 1-acyl-2-(9Z,12Z-octadecadienoyl)-sn-glycero-3-phospho-L-serine + CoA. The enzyme catalyses a 1-acyl-sn-glycero-3-phospho-L-serine + (5Z,8Z,11Z,14Z)-eicosatetraenoyl-CoA = 1-acyl-2-(5Z,8Z,11Z,14Z-eicosatetraenoyl)-sn-glycero-3-phospho-L-serine + CoA. It carries out the reaction 1-hexadecanoyl-sn-glycero-3-phospho-L-serine + (9Z)-octadecenoyl-CoA = 1-hexadecanoyl-2-(9Z-octadecenoyl)-sn-glycero-3-phospho-L-serine + CoA. It catalyses the reaction 1-(9Z-octadecenoyl)-sn-glycero-3-phospho-L-serine + (9Z)-octadecenoyl-CoA = 1,2-di-(9Z)-octadecenoyl-sn-glycero-3-phospho-L-serine + CoA. The catalysed reaction is 1-hexadecanoyl-sn-glycero-3-phospho-L-serine + (9Z,12Z)-octadecadienoyl-CoA = 1-hexadecanoyl-2-(9Z,12Z-octadecadienoyl)-sn-glycero-3-phospho-L-serine + CoA. The enzyme catalyses 1-(9Z-octadecenoyl)-sn-glycero-3-phospho-L-serine + (9Z,12Z)-octadecadienoyl-CoA = 1-(9Z-octadecenoyl)-2-(9Z,12Z-octadienoyl)-sn-glycero-3-phospho-L-serine + CoA. It carries out the reaction 1-hexadecanoyl-sn-glycero-3-phospho-L-serine + (5Z,8Z,11Z,14Z)-eicosatetraenoyl-CoA = 1-hexadecanoyl-2-(5Z,8Z,11Z,14Z-eicosatetraenoyl)-sn-glycero-3-phospho-L-serine + CoA. It catalyses the reaction 1-(9Z-octadecenoyl)-sn-glycero-3-phospho-L-serine + (5Z,8Z,11Z,14Z)-eicosatetraenoyl-CoA = 1-(9Z-octadecenoyl)-2-(5Z,8Z,11Z,14Z-eicosatetraenoyl)-sn-glycero-3-phospho-L-serine + CoA. Its pathway is lipid metabolism; phospholipid metabolism. Its activity is regulated as follows. Activity is inhibited by thimerosal. Its function is as follows. Lysophospholipid O-acyltransferase (LPLAT) that catalyzes the reacylation step of the phospholipid remodeling process also known as the Lands cycle. Catalyzes transfer of the fatty acyl chain from fatty acyl-CoA to 1-acyl lysophospholipid to form various classes of phospholipids. Converts 1-acyl lysophosphatidylcholine (LPC) into phosphatidylcholine (PC) (LPCAT activity), 1-acyl lysophosphatidylserine (LPS) into phosphatidylserine (PS) (LPSAT activity) and 1-acyl lysophosphatidylethanolamine (LPE) into phosphatidylethanolamine (PE) (LPEAT activity). Favors polyunsaturated fatty acyl-CoAs as acyl donors compared to saturated fatty acyl-CoAs. Has higher activity for LPC acyl acceptors compared to LPEs and LPSs. Can also transfer the fatty acyl chain from fatty acyl-CoA to 1-O-alkyl lysophospholipid or 1-O-alkenyl lysophospholipid with lower efficiency. Acts as a major LPC O-acyltransferase in liver and intestine. As a component of the liver X receptor/NR1H3 or NR1H2 signaling pathway, mainly catalyzes the incorporation of arachidonate into PCs of endoplasmic reticulum (ER) membranes, increasing membrane dynamics and enabling triacylglycerols transfer to nascent very low-density lipoprotein (VLDL) particles. Promotes processing of sterol regulatory protein SREBF1 in hepatocytes, likely by facilitating the translocation of SREBF1-SCAP complex from ER to the Golgi apparatus. Participates in mechanisms by which the liver X receptor/NR1H3 or NR1H2 signaling pathway counteracts lipid-induced ER stress response and inflammation. Down-regulates hepatic inflammation by limiting arachidonic acid availability for synthesis of inflammatory eicosanoids, such as prostaglandins. In enterocytes, acts as a component of a gut-brain feedback loop that coordinates dietary lipid absorption and food intake. Regulates the abundance of PCs containing linoleate and arachidonate in enterocyte membranes, enabling passive diffusion of fatty acids and cholesterol across the membrane for efficient chylomicron assembly. In the intestinal crypt, acts as a component of dietary-responsive phospholipid-cholesterol axis, regulating the biosynthesis of cholesterol and its mitogenic effects on intestinal stem cells. In Homo sapiens (Human), this protein is Lysophospholipid acyltransferase 5 (LPCAT3).